The sequence spans 83 residues: Cytochrome b559 subunit alpha (83 aa).

The helical transmembrane segment at 21–35 (IIHSITIPSLFIAGW) threads the bilayer. Residue His23 participates in heme binding.

This sequence belongs to the PsbE/PsbF family. As to quaternary structure, heterodimer of an alpha subunit and a beta subunit. PSII is composed of 1 copy each of membrane proteins PsbA, PsbB, PsbC, PsbD, PsbE, PsbF, PsbH, PsbI, PsbJ, PsbK, PsbL, PsbM, PsbT, PsbX, PsbY, PsbZ, Psb30/Ycf12, at least 3 peripheral proteins of the oxygen-evolving complex and a large number of cofactors. It forms dimeric complexes. The cofactor is heme b.

It is found in the plastid. The protein resides in the chloroplast thylakoid membrane. This b-type cytochrome is tightly associated with the reaction center of photosystem II (PSII). PSII is a light-driven water:plastoquinone oxidoreductase that uses light energy to abstract electrons from H(2)O, generating O(2) and a proton gradient subsequently used for ATP formation. It consists of a core antenna complex that captures photons, and an electron transfer chain that converts photonic excitation into a charge separation. The polypeptide is Cytochrome b559 subunit alpha (Lotus japonicus (Lotus corniculatus var. japonicus)).